Reading from the N-terminus, the 55-residue chain is Large ribosomal subunit protein bL33 (55 aa).

Belongs to the bacterial ribosomal protein bL33 family.

The sequence is that of Large ribosomal subunit protein bL33 from Micrococcus luteus (strain ATCC 4698 / DSM 20030 / JCM 1464 / CCM 169 / CCUG 5858 / IAM 1056 / NBRC 3333 / NCIMB 9278 / NCTC 2665 / VKM Ac-2230) (Micrococcus lysodeikticus).